Reading from the N-terminus, the 297-residue chain is MARLRLTIAYKGTDLHGWQVQEHATRPRPRTVQGVLEPIVSRMAGEQVRLHAAGRTDAGVHADGQVAHVDIPDHKLGVDWQKAINAQLPDDICILDVRRAADDFHARFDALGKRYTYRLWLTRRFIPPKLHGQVWATGPLDVYAMDRAARHLAGTHDFAAFQNQGTDVTSTVRTVHAIRRCPSGTLPAGALLTCSEPYTSWRCTGTHPDQPPATAGHPLAGIGLELVWSFEGDGFLKQMVRNMMGLLVAVGRGALAADDVPGIMATLDRSRAPATAPACGLTLSEVYYPPCDYPYAR.

Aspartate 57 (nucleophile) is an active-site residue. Residue tyrosine 115 coordinates substrate.

The protein belongs to the tRNA pseudouridine synthase TruA family. Homodimer.

The enzyme catalyses uridine(38/39/40) in tRNA = pseudouridine(38/39/40) in tRNA. Functionally, formation of pseudouridine at positions 38, 39 and 40 in the anticodon stem and loop of transfer RNAs. The protein is tRNA pseudouridine synthase A of Nitratidesulfovibrio vulgaris (strain ATCC 29579 / DSM 644 / CCUG 34227 / NCIMB 8303 / VKM B-1760 / Hildenborough) (Desulfovibrio vulgaris).